The chain runs to 269 residues: Gene 51 glycoprotein (269 aa).

4 N-linked (GlcNAc...) asparagine; by host glycosylation sites follow: N53, N58, N74, and N78. Disordered regions lie at residues L67–Y87 and M103–N137. Low complexity predominate over residues T76–Y87. Polar residues predominate over residues M103–L112. Residues S113 to K136 show a composition bias toward low complexity. N137, N161, N170, and N191 each carry an N-linked (GlcNAc...) asparagine; by host glycan.

The chain is Gene 51 glycoprotein (51) from Saimiriine herpesvirus 2 (strain 11) (SaHV-2).